We begin with the raw amino-acid sequence, 490 residues long: Aspartyl/glutamyl-tRNA(Asn/Gln) amidotransferase subunit B (490 aa).

Belongs to the GatB/GatE family. GatB subfamily. Heterotrimer of A, B and C subunits.

The catalysed reaction is L-glutamyl-tRNA(Gln) + L-glutamine + ATP + H2O = L-glutaminyl-tRNA(Gln) + L-glutamate + ADP + phosphate + H(+). It catalyses the reaction L-aspartyl-tRNA(Asn) + L-glutamine + ATP + H2O = L-asparaginyl-tRNA(Asn) + L-glutamate + ADP + phosphate + 2 H(+). In terms of biological role, allows the formation of correctly charged Asn-tRNA(Asn) or Gln-tRNA(Gln) through the transamidation of misacylated Asp-tRNA(Asn) or Glu-tRNA(Gln) in organisms which lack either or both of asparaginyl-tRNA or glutaminyl-tRNA synthetases. The reaction takes place in the presence of glutamine and ATP through an activated phospho-Asp-tRNA(Asn) or phospho-Glu-tRNA(Gln). The protein is Aspartyl/glutamyl-tRNA(Asn/Gln) amidotransferase subunit B of Prochlorococcus marinus (strain AS9601).